The following is a 278-amino-acid chain: Indole-3-glycerol phosphate synthase (278 aa).

Belongs to the TrpC family.

The enzyme catalyses 1-(2-carboxyphenylamino)-1-deoxy-D-ribulose 5-phosphate + H(+) = (1S,2R)-1-C-(indol-3-yl)glycerol 3-phosphate + CO2 + H2O. It participates in amino-acid biosynthesis; L-tryptophan biosynthesis; L-tryptophan from chorismate: step 4/5. The polypeptide is Indole-3-glycerol phosphate synthase (Stutzerimonas stutzeri (strain A1501) (Pseudomonas stutzeri)).